The chain runs to 386 residues: Palmitoyltransferase ZDHHC9 (386 aa).

Over 1–35 the chain is Cytoplasmic; the sequence is MSAVMITRKITRKWEKLPGKNTFCCDGRVMMARQK. A helical transmembrane segment spans residues 36–56; it reads GVFYLTLFLIVGTCSLFFAFE. Residues 57–63 lie on the Lumenal side of the membrane; it reads CPYLAVH. Residues 64 to 84 traverse the membrane as a helical segment; that stretch reads LSPAIPVFAVLLFVFVMAMLL. The Cytoplasmic segment spans residues 85–183; sequence RTSFSDPGVL…NCVGKRNYRY (99 aa). The DHHC domain occupies 139–189; the sequence is KYCYTCKIFRPPRASHCSICDNCVDRFDHHCPWVGNCVGKRNYRYFYLFTL. Residue Cys169 is the S-palmitoyl cysteine intermediate of the active site. A helical membrane pass occupies residues 184–204; the sequence is FYLFTLSLSLLTIYIFAFDIV. Residues 205 to 224 are Lumenal-facing; sequence HVVLRSVDSGFVNTLKETPG. A helical transmembrane segment spans residues 225–245; it reads TVLEVLVCFFTLWSVVGLTGF. Topologically, residues 246-386 are cytoplasmic; the sequence is HTYLISLNQT…APAVIKESTH (141 aa). The segment covering 306–334 has biased composition (polar residues); that stretch reads SCSSAPSNGATTVPVNKSSNPATQTTKSS. Residues 306–386 form a disordered region; it reads SCSSAPSNGA…APAVIKESTH (81 aa).

It belongs to the DHHC palmitoyltransferase family. ERF2/ZDHHC9 subfamily.

It localises to the endoplasmic reticulum membrane. The protein resides in the golgi apparatus membrane. It carries out the reaction L-cysteinyl-[protein] + hexadecanoyl-CoA = S-hexadecanoyl-L-cysteinyl-[protein] + CoA. Palmitoyltransferase that catalyzes the addition of palmitate onto various protein substrates, such as ADRB2, GSDMD, HRAS, NRAS and CGAS. This is Palmitoyltransferase ZDHHC9 from Danio rerio (Zebrafish).